The primary structure comprises 316 residues: PAK4-inhibitor inka1 (316 aa).

The segment at tyrosine 108–threonine 130 is disordered. The segment covering glutamate 119–serine 128 has biased composition (acidic residues). 2 inka box regions span residues aspartate 182 to glutamate 219 and serine 289 to leucine 316.

It belongs to the INKA family. Interacts with pak4/pak5.

The protein resides in the nucleus. The protein localises to the cytoplasm. Inhibitor of the serine/threonine-protein kinase pak4/pak5. Acts by binding pak4/pak5 in a substrate-like manner, inhibiting the protein kinase activity. Required for the proper migration of neural crest cells during embryonic development, probably by inhibiting pak4/pak5. The sequence is that of PAK4-inhibitor inka1 from Xenopus laevis (African clawed frog).